A 1189-amino-acid chain; its full sequence is Disabled homolog 2-interacting protein (1189 aa).

Residues 1–75 are disordered; sequence MSAGGSARKS…EPSAATPFRV (75 aa). Basic residues predominate over residues 20-38; that stretch reads LLRRPRLQRQRSRSRSRTR. Over residues 39–49 the composition is skewed to basic and acidic residues; that stretch reads PARESPQERPG. The PH domain maps to 101-202; sequence SFRHILPGFR…WMENLRRAVH (102 aa). Positions 193-311 constitute a C2 domain; that stretch reads WMENLRRAVH…AGRQFVEKWY (119 aa). Residues 387-595 enclose the Ras-GAP domain; that stretch reads GKVKDFLTDL…TNMQRFLLEI (209 aa). The tract at residues 646–943 is necessary for interaction with AKT1; the sequence is LRDVHTALST…RTPPNLLSTL (298 aa). The span at 653 to 668 shows a compositional bias: polar residues; sequence LSTPGSGQLPGTNDLA. 2 disordered regions span residues 653–678 and 715–742; these read LSTPGSGQLPGTNDLASTPGSGSSSI and RSSGVQPSPARSSSYSEANEPDLQMANG. Residues 669–678 show a composition bias toward low complexity; the sequence is STPGSGSSSI. Residues 715-731 show a composition bias toward polar residues; sequence RSSGVQPSPARSSSYSE. Ser-728 carries the post-translational modification Phosphoserine; by MAP3K5 and RIPK1. At Ser-747 the chain carries Phosphoserine. Disordered stretches follow at residues 803 to 823, 843 to 865, 895 to 998, 1015 to 1035, and 1164 to 1189; these read AGQTPTTPGTSEGAPGRPQLL, PRGLGDSGSEGHSSLSSHSNSEE, SLTE…SPNA, EDEGLGPDPPHRDRLRSKDEL, and RNGISPTNPTKLQITENGEFRNSSNC. The segment covering 852–865 has biased composition (low complexity); that stretch reads EGHSSLSSHSNSEE. Positions 919 to 931 are enriched in pro residues; sequence QPPPPPPPPPPAP. Polar residues-rich tracts occupy residues 938 to 955 and 966 to 976; these read NLLSTLQYPRPSSGTLAS and RLRQQSSSSKG. Phosphoserine occurs at positions 978 and 995. Residues 1023-1035 show a composition bias toward basic and acidic residues; the sequence is PPHRDRLRSKDEL. Residues 1026-1159 adopt a coiled-coil conformation; that stretch reads RDRLRSKDEL…SALTQLKERY (134 aa).

On plasma membrane, exists in an inactive form complexed with TNFR1; in response to TNF-alpha, dissociates from TNFR1 complex, translocates to cytoplasm and forms part of an intracellular signaling complex comprising TRADD, RIPK1, TRAF2 and MAP3K5. Interacts with DAB1. Interacts (via NPXY motif) with DAB2 (via PID domain). Interacts (via PH domain) with ERN1. Part of a cytoplasmic complex made of HIPK1, DAB2IP and MAP3K5 in response to TNF-alpha; this complex formation promotes MAP3K5-JNK activation and subsequent apoptosis. Interacts (via N-terminal domain) with JAK2; the interaction occurs in a IFNG/IFN-gamma-dependent manner and inhibits JAK2 autophosphorylation activity. Interacts (via C2 domain) with GSK3B; the interaction stimulates GSK3B kinase activation. Interacts (via C2 domain) with PPP2CA. Interacts (via proline-rich motif) with a regulatory p85 subunit (via SH3 domain) of the PI3K complex; the interaction inhibits the PI3K-AKT complex activity in a TNF-alpha-dependent manner in prostate cancer (PCa) cells. Interacts with AKT1; the interaction is increased in a TNF-alpha-induced manner. Interacts (via C2 domain and active form preferentially) with KDR/VEGFR2 (tyrosine-phosphorylated active form preferentially); the interaction occurs at the late phase of VEGFA response and inhibits KDR/VEGFR2 activity. Interacts (via N-terminus C2 domain) with MAP3K5 ('Ser-966' dephosphorylated form preferentially); the interaction occurs in a TNF-alpha-induced manner. Interacts (via Ras-GAP domain) with the catalytic subunit of protein phosphatase PP2A; the interaction occurs in resting endothelial cells, is further enhanced by TNF-alpha stimulation and is required to bridge PP2A to MAP3K5. Interacts (via C-terminus PER domain) with TRAF2 (via zinc fingers); the interaction occurs in a TNF-alpha-dependent manner. Interacts with 14-3-3 proteins; the interaction occurs in a TNF-alpha-dependent manner. Interacts (via Ras-GAP domain) with RIPK1 (via kinase domain); the interaction occurs in a TNF-alpha-dependent manner. Interacts with RAB40C; acts as a GAP for RAB40C. Post-translationally, in response to TNF-alpha-induction, phosphorylated at Ser-728; phosphorylation leads to a conformational change, and thus, increases its association with 14-3-3 proteins, MAP3K5, RIPK1 and TRAF2 in endothelial cells; also stimulates regulatory p85 subunit sequestring and PI3K-p85 complex activity inhibition. In terms of tissue distribution, expressed in endothelial and vascular smooth muscle cells (VSMCs). Expressed in prostate epithelial but poorly in prostate cancer cells. Poorly expressed in medulloblastoma cells compared to cerebellar precursor proliferating progenitor cells (at protein level). Low expression in prostate. Down-regulated in prostate cancer.

The protein resides in the cytoplasm. Its subcellular location is the cell membrane. It localises to the membrane. It is found in the cell projection. The protein localises to the dendrite. Functions as a scaffold protein implicated in the regulation of a large spectrum of both general and specialized signaling pathways. Involved in several processes such as innate immune response, inflammation and cell growth inhibition, apoptosis, cell survival, angiogenesis, cell migration and maturation. Also plays a role in cell cycle checkpoint control; reduces G1 phase cyclin levels resulting in G0/G1 cell cycle arrest. Mediates signal transduction by receptor-mediated inflammatory signals, such as the tumor necrosis factor (TNF), interferon (IFN) or lipopolysaccharide (LPS). Modulates the balance between phosphatidylinositol 3-kinase (PI3K)-AKT-mediated cell survival and apoptosis stimulated kinase (MAP3K5)-JNK signaling pathways; sequesters both AKT1 and MAP3K5 and counterbalances the activity of each kinase by modulating their phosphorylation status in response to pro-inflammatory stimuli. Acts as a regulator of the endoplasmic reticulum (ER) unfolded protein response (UPR) pathway; specifically involved in transduction of the ER stress-response to the JNK cascade through ERN1. Mediates TNF-alpha-induced apoptosis activation by facilitating dissociation of inhibitor 14-3-3 from MAP3K5; recruits the PP2A phosphatase complex which dephosphorylates MAP3K5 on 'Ser-966', leading to the dissociation of 13-3-3 proteins and activation of the MAP3K5-JNK signaling pathway in endothelial cells. Also mediates TNF/TRAF2-induced MAP3K5-JNK activation, while it inhibits CHUK-NF-kappa-B signaling. Acts a negative regulator in the IFN-gamma-mediated JAK-STAT signaling cascade by inhibiting smooth muscle cell (VSMCs) proliferation and intimal expansion, and thus, prevents graft arteriosclerosis (GA). Acts as a GTPase-activating protein (GAP) for the ADP ribosylation factor 6 (ARF6), Ras and RAB40C. Promotes hydrolysis of the ARF6-bound GTP and thus, negatively regulates phosphatidylinositol 4,5-bisphosphate (PIP2)-dependent TLR4-TIRAP-MyD88 and NF-kappa-B signaling pathways in endothelial cells in response to lipopolysaccharides (LPS). Binds specifically to phosphatidylinositol 4-phosphate (PtdIns4P) and phosphatidylinositol 3-phosphate (PtdIns3P). In response to vascular endothelial growth factor (VEGFA), acts as a negative regulator of the VEGFR2-PI3K-mediated angiogenic signaling pathway by inhibiting endothelial cell migration and tube formation. In the developing brain, promotes both the transition from the multipolar to the bipolar stage and the radial migration of cortical neurons from the ventricular zone toward the superficial layer of the neocortex in a glial-dependent locomotion process. Probable downstream effector of the Reelin signaling pathway; promotes Purkinje cell (PC) dendrites development and formation of cerebellar synapses. Also functions as a tumor suppressor protein in prostate cancer progression; prevents cell proliferation and epithelial-to-mesenchymal transition (EMT) through activation of the glycogen synthase kinase-3 beta (GSK3B)-induced beta-catenin and inhibition of PI3K-AKT and Ras-MAPK survival downstream signaling cascades, respectively. The polypeptide is Disabled homolog 2-interacting protein (Homo sapiens (Human)).